The chain runs to 257 residues: Glutamate racemase (257 aa).

Residues 12 to 13 (DS) and 44 to 45 (YG) each bind substrate. The active-site Proton donor/acceptor is cysteine 75. Residue 76 to 77 (NT) coordinates substrate. Cysteine 185 acts as the Proton donor/acceptor in catalysis. Residue 186 to 187 (TH) participates in substrate binding.

The protein belongs to the aspartate/glutamate racemases family.

It catalyses the reaction L-glutamate = D-glutamate. The protein operates within cell wall biogenesis; peptidoglycan biosynthesis. In terms of biological role, provides the (R)-glutamate required for cell wall biosynthesis. The sequence is that of Glutamate racemase from Clostridium botulinum (strain Langeland / NCTC 10281 / Type F).